A 460-amino-acid chain; its full sequence is Cysteine--tRNA ligase (460 aa).

C28 is a Zn(2+) binding site. Residues 30-40 carry the 'HIGH' region motif; the sequence is MTVYDYCHLGH. Residues C209, H234, and E238 each coordinate Zn(2+). The 'KMSKS' region motif lies at 266-270; that stretch reads KMSKS. K269 lines the ATP pocket.

It belongs to the class-I aminoacyl-tRNA synthetase family. Monomer. Requires Zn(2+) as cofactor.

It localises to the cytoplasm. The enzyme catalyses tRNA(Cys) + L-cysteine + ATP = L-cysteinyl-tRNA(Cys) + AMP + diphosphate. In Pseudomonas putida (strain GB-1), this protein is Cysteine--tRNA ligase.